The sequence spans 137 residues: Nucleoside diphosphate kinase (137 aa).

Residues lysine 10, phenylalanine 58, arginine 86, threonine 92, arginine 103, and asparagine 113 each coordinate ATP. The Pros-phosphohistidine intermediate role is filled by histidine 116.

The protein belongs to the NDK family. Homotetramer. The cofactor is Mg(2+).

The protein resides in the cytoplasm. The enzyme catalyses a 2'-deoxyribonucleoside 5'-diphosphate + ATP = a 2'-deoxyribonucleoside 5'-triphosphate + ADP. The catalysed reaction is a ribonucleoside 5'-diphosphate + ATP = a ribonucleoside 5'-triphosphate + ADP. Its function is as follows. Major role in the synthesis of nucleoside triphosphates other than ATP. The ATP gamma phosphate is transferred to the NDP beta phosphate via a ping-pong mechanism, using a phosphorylated active-site intermediate. The chain is Nucleoside diphosphate kinase from Helicobacter pylori (strain ATCC 700392 / 26695) (Campylobacter pylori).